A 402-amino-acid chain; its full sequence is Multidrug resistance protein MdtG (402 aa).

Helical transmembrane passes span 14–34 (LYIV…IMPF), 52–72 (LWTG…APFW), 90–110 (LGMA…QLLI), 113–133 (ALLG…ATQV), 149–169 (AVSG…LYGL), 171–191 (PVFF…LFFV), 219–239 (VICL…VTPI), 254–274 (LAFI…ISAP), 288–308 (VLIF…LVSN), 318–338 (LLGA…LYNI), and 376–396 (AVFY…WISF).

The protein belongs to the major facilitator superfamily. DHA1 family. MdtG (TC 2.A.1.2.20) subfamily.

It is found in the cell inner membrane. This is Multidrug resistance protein MdtG from Proteus mirabilis (strain HI4320).